Here is a 297-residue protein sequence, read N- to C-terminus: Protein MIZU-KUSSEI 1 (297 aa).

As to expression, expressed in root meristematic region, cortical cells, lateral root cap cells, columella cells of the root cap, mature region of the roots and leaf hydathodes.

It localises to the endoplasmic reticulum membrane. In terms of biological role, plays a role in lateral root development by maintaining auxin levels. This function requires GNOM (GN/MIZ2) activity. Negatively regulates cytokinin sensitivity on root development. Positively regulates hydrotropism in roots. This Arabidopsis thaliana (Mouse-ear cress) protein is Protein MIZU-KUSSEI 1 (MIZ1).